We begin with the raw amino-acid sequence, 124 residues long: Small ribosomal subunit protein uS12 (124 aa).

The segment at 1–30 (MPTIQQLVRKGRTPKVTKTKAPALKANPQQ) is disordered. Over residues 9 to 18 (RKGRTPKVTK) the composition is skewed to basic residues.

The protein belongs to the universal ribosomal protein uS12 family. As to quaternary structure, part of the 30S ribosomal subunit. Contacts proteins S8 and S17. May interact with IF1 in the 30S initiation complex.

Functionally, with S4 and S5 plays an important role in translational accuracy. Interacts with and stabilizes bases of the 16S rRNA that are involved in tRNA selection in the A site and with the mRNA backbone. Located at the interface of the 30S and 50S subunits, it traverses the body of the 30S subunit contacting proteins on the other side and probably holding the rRNA structure together. The combined cluster of proteins S8, S12 and S17 appears to hold together the shoulder and platform of the 30S subunit. This Leifsonia xyli subsp. xyli (strain CTCB07) protein is Small ribosomal subunit protein uS12.